Here is a 178-residue protein sequence, read N- to C-terminus: Endoribonuclease YbeY (178 aa).

Zn(2+)-binding residues include histidine 118, histidine 122, and histidine 128.

The protein belongs to the endoribonuclease YbeY family. Requires Zn(2+) as cofactor.

It localises to the cytoplasm. Single strand-specific metallo-endoribonuclease involved in late-stage 70S ribosome quality control and in maturation of the 3' terminus of the 16S rRNA. In Mycolicibacterium gilvum (strain PYR-GCK) (Mycobacterium gilvum (strain PYR-GCK)), this protein is Endoribonuclease YbeY.